Here is a 316-residue protein sequence, read N- to C-terminus: Ribosomal RNA large subunit methyltransferase F (316 aa).

Belongs to the methyltransferase superfamily. METTL16/RlmF family.

It is found in the cytoplasm. The catalysed reaction is adenosine(1618) in 23S rRNA + S-adenosyl-L-methionine = N(6)-methyladenosine(1618) in 23S rRNA + S-adenosyl-L-homocysteine + H(+). Specifically methylates the adenine in position 1618 of 23S rRNA. This is Ribosomal RNA large subunit methyltransferase F from Pseudomonas putida (strain W619).